Consider the following 305-residue polypeptide: Oxidoreductase swnR (305 aa).

The protein belongs to the NmrA-type oxidoreductase family. Isoflavone reductase subfamily.

It carries out the reaction L-pipecolate + O2 = L-1-piperideine-6-carboxylate + H2O2 + H(+). It participates in mycotoxin biosynthesis. Functionally, oxidoreductase; part of the gene cluster that mediates the biosynthesis of swainsonine (SW), a cytotoxic fungal alkaloid and a potential cancer therapy drug. Swainsonine production occurs via a multibranched pathway and is dispensable for fungal colonization of plants and infection of insect hosts. The first step of swainsonine biosynthesis is the production of the precursor pipecolic acid (PA) via conversion of L-lysine (Lys) to 1-piperideine-6-carboxylate (P6C) by the aminotransferase swnA, the latter being further reduced to PA by the reductase swnR. The PKS-NRPS hybrid synthetase swnK uptakes and condensates PA and malonyl-CoA with and without skipping of the ketoreductase (KR) domain in order to produce 3 intermediates, 1-oxoindolizidine, (1S)-1-hydroxyindolizin, and (1R)-1-hydroxyindolizine; with the transisomer (1S)-1-hydroxyindolizin being predominant. The terminal thioester reductase (TE) domain of swnK is involved in reduction of the thioester bond to release the intermediate aldehydes. The oxidoreductase swnN could contribute to the reduction of 1-oxoindolizidine to (1S)-1-hydroxyindolizin and (1R)-1-hydroxyindolizine, contributing to the major route of SW production. The dioxygenase swnH2 would be responsible for the oxidization of (1R)-1-hydroxyindolizine into (1R,2S)-1,2-dihydroxyindolizine and of (1S)-1-hydroxyindolizin to yield both (1R,2S)-1,2-dihydroxyindolizine and (1S,2S)-1,2-dihydroxyindolizine. The dioxygenase swnH1 then performs the conversion of the 1,2-dihydroxyindolizine epimers to SW. The chain is Oxidoreductase swnR from Arthroderma benhamiae (strain ATCC MYA-4681 / CBS 112371) (Trichophyton mentagrophytes).